Reading from the N-terminus, the 146-residue chain is Large ribosomal subunit protein uL13 (146 aa).

This sequence belongs to the universal ribosomal protein uL13 family. Part of the 50S ribosomal subunit.

Its function is as follows. This protein is one of the early assembly proteins of the 50S ribosomal subunit, although it is not seen to bind rRNA by itself. It is important during the early stages of 50S assembly. The polypeptide is Large ribosomal subunit protein uL13 (Methylobacillus flagellatus (strain ATCC 51484 / DSM 6875 / VKM B-1610 / KT)).